Reading from the N-terminus, the 319-residue chain is Transcription factor bHLH111 (319 aa).

The disordered stretch occupies residues 1-23 (MDHHHHIASRNSSTTSELPSFEP). Over residues 9-18 (SRNSSTTSEL) the composition is skewed to polar residues. Residues 195-244 (SEGSTLSPEKELPKAKLRDKITTLQQIVSPFGKTDTASVLQEAITYINFY) form the bHLH domain.

Homodimer.

It localises to the nucleus. This Arabidopsis thaliana (Mouse-ear cress) protein is Transcription factor bHLH111 (BHLH111).